Here is an 89-residue protein sequence, read N- to C-terminus: Small ribosomal subunit protein uS14A (89 aa).

It belongs to the universal ribosomal protein uS14 family. As to quaternary structure, part of the 30S ribosomal subunit. Contacts proteins S3 and S10.

Functionally, binds 16S rRNA, required for the assembly of 30S particles and may also be responsible for determining the conformation of the 16S rRNA at the A site. This chain is Small ribosomal subunit protein uS14A, found in Listeria welshimeri serovar 6b (strain ATCC 35897 / DSM 20650 / CCUG 15529 / CIP 8149 / NCTC 11857 / SLCC 5334 / V8).